Here is a 203-residue protein sequence, read N- to C-terminus: CASP-like protein 2U6 (203 aa).

The Cytoplasmic segment spans residues 1–31; it reads MSEHRIPVAADKKISPPISAGEQKGCKGLKR. Residues 32–52 traverse the membrane as a helical segment; sequence TDLMLRFAAFVCCTVTMVVLI. Residues 53–84 lie on the Extracellular side of the membrane; that stretch reads TDKQTSAIQVPGFNNLTITKTVSFDLAKAFVY. Asn-67 is a glycosylation site (N-linked (GlcNAc...) asparagine). Residues 85 to 105 form a helical membrane-spanning segment; it reads LVSAAGIGAGYTLLVLVLSII. At 106–111 the chain is on the cytoplasmic side; sequence SAERSK. A helical transmembrane segment spans residues 112–132; that stretch reads AIAWFIFVFDQLITYVLLAAA. At 133-164 the chain is on the extracellular side; that stretch reads AASTEVAYMGAHAPPEASWLKVCSLFGRFCHQ. The chain crosses the membrane as a helical span at residues 165–185; that stretch reads LGASLVTSLISTVLFAFSAAI. Residues 186–203 lie on the Cytoplasmic side of the membrane; the sequence is SAYYLFSNTNVRPAYSKG.

It belongs to the Casparian strip membrane proteins (CASP) family. Homodimer and heterodimers.

The protein resides in the cell membrane. The protein is CASP-like protein 2U6 of Selaginella moellendorffii (Spikemoss).